The chain runs to 60 residues: Arabinogalactan protein 12 (60 aa).

The N-terminal stretch at 1–27 (MESMKMKLIVVLMVAIVAFSAVGNVAA) is a signal peptide. Gln28 is subject to Pyrrolidone carboxylic acid. 4-hydroxyproline is present on residues Pro32, Pro34, and Pro36. 3 O-linked (Ara...) hydroxyproline glycosylation sites follow: Pro32, Pro34, and Pro36. A lipid anchor (GPI-anchor amidated serine) is attached at Ser38. Positions 39-60 (DAAMFVPALFASVAALASGFLF) are cleaved as a propeptide — removed in mature form.

Belongs to the AG-peptide AGP family. In terms of processing, contains 4-hydroxyproline; hydroxylated on Pro-32, Pro-34 and Pro-36. Post-translationally, O-glycosylated on hydroxyprolines; noncontiguous hydroxylproline residues are glycosylated with arabinogalactan. As to expression, expressed in reproductive tissues. Expressed in chalaza, funiculus, stigma, septum, style and transmitting tract.

The protein localises to the cell membrane. Functionally, proteoglycan that seems to be implicated in diverse developmental roles such as differentiation, cell-cell recognition, embryogenesis and programmed cell death. This is Arabinogalactan protein 12 from Arabidopsis thaliana (Mouse-ear cress).